The following is a 534-amino-acid chain: UDP-glucuronosyltransferase 1A3 (534 aa).

The first 28 residues, 1–28 (MATGLQVPLPWLATGLLLLLSVQPWAES), serve as a signal peptide directing secretion. 4 N-linked (GlcNAc...) asparagine glycosylation sites follow: asparagine 119, asparagine 142, asparagine 296, and asparagine 348. The helical transmembrane segment at 492–508 (VIGFLLAVVLTVAFITF) threads the bilayer.

The protein belongs to the UDP-glycosyltransferase family. In terms of assembly, homodimer. Homooligomer. Interacts with UGT1A1, UGT1A4, UGT1A6, UGT1A7, UGT1A8, UGT1A9 and UGT1A10 to form heterodimers. Isoform 1 interacts with isoform 2/i2 suggesting that oligomerization is involved in negative regulation of transferase activity by isoform 2. Isoform 1 also interacts with respective i2 isoforms of UGT1A1, UGT1A4, UGT1A6, UGT1A7, UGT1A8, UGT1A9 and UGT1A10. As to expression, expressed in liver, kidney, colon, esophagus and small intestine. Expressed in liver, kidney and colon. Not expressed in esophagus and small intestine.

Its subcellular location is the endoplasmic reticulum membrane. The catalysed reaction is glucuronate acceptor + UDP-alpha-D-glucuronate = acceptor beta-D-glucuronoside + UDP + H(+). The enzyme catalyses 17beta-estradiol + UDP-alpha-D-glucuronate = 17beta-estradiol 3-O-(beta-D-glucuronate) + UDP + H(+). It catalyses the reaction 17beta-estradiol + UDP-alpha-D-glucuronate = 17beta-estradiol 17-O-(beta-D-glucuronate) + UDP + H(+). It carries out the reaction 17alpha-estradiol + UDP-alpha-D-glucuronate = 17alpha-estradiol 3-O-(beta-D-glucuronate) + UDP + H(+). The catalysed reaction is estrone + UDP-alpha-D-glucuronate = estrone 3-O-(beta-D-glucuronate) + UDP + H(+). The enzyme catalyses chenodeoxycholate + UDP-alpha-D-glucuronate = chenodeoxycholoyl-24-O-(beta-D-glucuronate) + UDP. It catalyses the reaction deoxycholate + UDP-alpha-D-glucuronate = deoxycholoyl-24-O-(beta-D-glucuronate) + UDP. It carries out the reaction lithocholate + UDP-alpha-D-glucuronate = lithocholoyl-24-O-(beta-D-glucuronate) + UDP. The catalysed reaction is hyodeoxycholate + UDP-alpha-D-glucuronate = hyodeoxycholoyl-24-O-(beta-D-glucuronate) + UDP. The enzyme catalyses hyocholate + UDP-alpha-D-glucuronate = hyocholoyl-24-O-(beta-D-glucuronate) + UDP. It catalyses the reaction calcidiol + UDP-alpha-D-glucuronate = calcidiol 25-O-(beta-D-glucuronide) + UDP + H(+). It carries out the reaction (E)-ferulate + UDP-alpha-D-glucuronate = (E)-4-O-(beta-D-glucuronosyl)-ferulate + UDP + H(+). The catalysed reaction is (E)-ferulate + UDP-alpha-D-glucuronate = (E)-ferulic acid beta-D-glucuronate ester + UDP. The enzyme catalyses losartan + UDP-alpha-D-glucuronate = losartan-2-N-beta-D-glucuronide + UDP. It catalyses the reaction candesartan + UDP-alpha-D-glucuronate = candesartan-2-N-beta-D-glucuronide + UDP. It carries out the reaction zolasartan + UDP-alpha-D-glucuronate = zolarsartan-2-N-beta-D-glucuronide + UDP. Functionally, UDP-glucuronosyltransferase (UGT) that catalyzes phase II biotransformation reactions in which lipophilic substrates are conjugated with glucuronic acid to increase the metabolite's water solubility, thereby facilitating excretion into either the urine or bile. Essential for the elimination and detoxification of drugs, xenobiotics and endogenous compounds. Catalyzes the glucuronidation of endogenous estrogen hormones such as estradiol and estrone. Contributes to bile acid (BA) detoxification by catalyzing the glucuronidation of BA substrates, which are natural detergents for dietary lipids absorption. Involved in the glucuronidation of calcidiol, which is the major circulating form of vitamin D3, essential for the regulation of calcium and phosphate homeostasis. Involved in the glucuronidation of the phytochemical ferulic acid at the phenolic or the carboxylic acid group. Involved in the glucuronidation of the AGTR1 angiotensin receptor antagonists losartan, candesartan and zolarsartan, which can inhibit the effect of angiotensin II. In terms of biological role, lacks UDP-glucuronosyltransferase (UGT) activity but acts as a negative regulator of isoform 1. This chain is UDP-glucuronosyltransferase 1A3, found in Homo sapiens (Human).